A 115-amino-acid chain; its full sequence is Large ribosomal subunit protein uL24 (115 aa).

This sequence belongs to the universal ribosomal protein uL24 family. In terms of assembly, part of the 50S ribosomal subunit.

In terms of biological role, one of two assembly initiator proteins, it binds directly to the 5'-end of the 23S rRNA, where it nucleates assembly of the 50S subunit. One of the proteins that surrounds the polypeptide exit tunnel on the outside of the subunit. This is Large ribosomal subunit protein uL24 from Amoebophilus asiaticus (strain 5a2).